We begin with the raw amino-acid sequence, 133 residues long: Phosphoribosyl-AMP cyclohydrolase (133 aa).

Asp-82 lines the Mg(2+) pocket. Residue Cys-83 participates in Zn(2+) binding. The Mg(2+) site is built by Asp-84 and Asp-86. Zn(2+) contacts are provided by Cys-99 and Cys-106.

Belongs to the PRA-CH family. Homodimer. Requires Mg(2+) as cofactor. The cofactor is Zn(2+).

The protein localises to the cytoplasm. It carries out the reaction 1-(5-phospho-beta-D-ribosyl)-5'-AMP + H2O = 1-(5-phospho-beta-D-ribosyl)-5-[(5-phospho-beta-D-ribosylamino)methylideneamino]imidazole-4-carboxamide. It functions in the pathway amino-acid biosynthesis; L-histidine biosynthesis; L-histidine from 5-phospho-alpha-D-ribose 1-diphosphate: step 3/9. Functionally, catalyzes the hydrolysis of the adenine ring of phosphoribosyl-AMP. This Rhodospirillum centenum (strain ATCC 51521 / SW) protein is Phosphoribosyl-AMP cyclohydrolase.